The following is a 471-amino-acid chain: 5-hydroxytryptamine receptor 2A (471 aa).

Residues 1-80 (MEILCEDNIS…LQEKNWSALL (80 aa)) are Extracellular-facing. 5 N-linked (GlcNAc...) asparagine glycosylation sites follow: N8, N38, N44, N51, and N54. A helical transmembrane segment spans residues 81-97 (TTVVIILTIAGNILVIM). Topologically, residues 98-111 (AVSLEKKLQNATNY) are cytoplasmic. Residues 112 to 137 (FLMSLAIADMLLGFLVMPVSMLTILY) traverse the membrane as a helical segment. At 138 to 146 (GYRWPLPSK) the chain is on the extracellular side. Residues 147 to 171 (LCAIWIYLDVLFSTASIMHLCAISL) form a helical membrane-spanning segment. A disulfide bond links C148 and C227. D155 is a binding site for serotonin. The short motif at 172-174 (DRY) is the DRY motif; important for ligand-induced conformation changes element. The Cytoplasmic portion of the chain corresponds to 172-191 (DRYVAIQNPIHHSRFNSRTK). Residues 192–215 (AFLKIIAVWTISVGISMPIPVFGL) traverse the membrane as a helical segment. Over 216–232 (QDDSKVFKEGSCLLADD) the chain is Extracellular. Residues 233–258 (NFVLIGSFVAFFIPLTIMVITYFLTI) traverse the membrane as a helical segment. Over 259–322 (KSLQKEATLC…QSISNEQKAC (64 aa)) the chain is Cytoplasmic. S280 carries the post-translational modification Phosphoserine. A helical transmembrane segment spans residues 323–348 (KVLGIVFFLFVVMWCPFFITNIMAVI). N343 provides a ligand contact to serotonin. The cysteines at positions 349 and 353 are disulfide-linked. The Extracellular portion of the chain corresponds to 349-356 (CKESCNEN). A helical transmembrane segment spans residues 357 to 382 (VIGALLNVFVWIGYLSSAVNPLVYTL). Positions 376–380 (NPLVY) match the NPxxY motif; important for ligand-induced conformation changes and signaling motif. The Cytoplasmic portion of the chain corresponds to 383-471 (FNKTYRSAFS…ETVNEKVSCV (89 aa)). Residues 469-471 (SCV) carry the PDZ-binding motif.

Belongs to the G-protein coupled receptor 1 family. Interacts (via C-terminus) with MPDZ and PATJ. May interact (via C-terminus) with MPP3, PRDX6, DLG4, DLG1, CASK, APBA1 and MAGI2. Interacts with GRM2 and DRD2; this may affect signaling. In terms of tissue distribution, detected in adult intestine, especially in mucosal epithelium, longitudinal and circular layers of muscularis externa and myenteric plexuses. Highly expressed in Paneth cells, and detected at lower levels in enterocytes (at protein level). Detected in brain cortex.

The protein resides in the cell membrane. It is found in the cell projection. It localises to the axon. Its subcellular location is the cytoplasmic vesicle. The protein localises to the membrane. The protein resides in the caveola. It is found in the dendrite. It localises to the presynapse. G-protein coupled receptor activity is regulated by lipids: oleamide increases HTR2A-mediated activity. Its function is as follows. G-protein coupled receptor for 5-hydroxytryptamine (serotonin). Also functions as a receptor for various drugs and psychoactive substances, including mescaline, psilocybin, 1-(2,5-dimethoxy-4-iodophenyl)-2-aminopropane (DOI) and lysergic acid diethylamide (LSD). Ligand binding causes a conformation change that triggers signaling via guanine nucleotide-binding proteins (G proteins) and modulates the activity of downstream effectors. HTR2A is coupled to G(q)/G(11) G alpha proteins and activates phospholipase C-beta, releasing diacylglycerol (DAG) and inositol 1,4,5-trisphosphate (IP3) second messengers that modulate the activity of phosphatidylinositol 3-kinase and promote the release of Ca(2+) ions from intracellular stores, respectively. Beta-arrestin family members inhibit signaling via G proteins and mediate activation of alternative signaling pathways. Affects neural activity, perception, cognition and mood. Plays a role in the regulation of behavior, including responses to anxiogenic situations and psychoactive substances. Plays a role in intestinal smooth muscle contraction, and may play a role in arterial vasoconstriction. This is 5-hydroxytryptamine receptor 2A (Htr2a) from Rattus norvegicus (Rat).